A 159-amino-acid chain; its full sequence is Cytochrome c-type biogenesis protein CcmE (159 aa).

The Cytoplasmic portion of the chain corresponds to 1–8 (MNLRRKNR). A helical; Signal-anchor for type II membrane protein membrane pass occupies residues 9 to 29 (LWVVCAVLAGLALTTALVLYA). Residues 30-159 (LRANIDLFYT…PQRADKDTSS (130 aa)) are Periplasmic-facing. The tract at residues 129–159 (KHDENYTPPEVEKAMQENHRRPQRADKDTSS) is disordered. The heme site is built by His-130 and Tyr-134.

It belongs to the CcmE/CycJ family.

It is found in the cell inner membrane. Its function is as follows. Heme chaperone required for the biogenesis of c-type cytochromes. Transiently binds heme delivered by CcmC and transfers the heme to apo-cytochromes in a process facilitated by CcmF and CcmH. The chain is Cytochrome c-type biogenesis protein CcmE from Salmonella paratyphi A (strain ATCC 9150 / SARB42).